Here is a 291-residue protein sequence, read N- to C-terminus: 33 kDa chaperonin (291 aa).

2 disulfides stabilise this stretch: cysteine 229/cysteine 231 and cysteine 262/cysteine 265.

This sequence belongs to the HSP33 family. In terms of processing, under oxidizing conditions two disulfide bonds are formed involving the reactive cysteines. Under reducing conditions zinc is bound to the reactive cysteines and the protein is inactive.

It localises to the cytoplasm. Its function is as follows. Redox regulated molecular chaperone. Protects both thermally unfolding and oxidatively damaged proteins from irreversible aggregation. Plays an important role in the bacterial defense system toward oxidative stress. This chain is 33 kDa chaperonin, found in Aliivibrio salmonicida (strain LFI1238) (Vibrio salmonicida (strain LFI1238)).